We begin with the raw amino-acid sequence, 67 residues long: Small ribosomal subunit protein eS31 (67 aa).

Zn(2+)-binding residues include Cys31, Cys34, Cys49, and Cys52. Residues 31-52 form a C4-type zinc finger; sequence CPKCGAGVFMAEHLNRFACGKC.

The protein belongs to the eukaryotic ribosomal protein eS31 family. As to quaternary structure, part of the 30S ribosomal subunit. Zn(2+) is required as a cofactor.

The chain is Small ribosomal subunit protein eS31 from Methanococcus maripaludis (strain C7 / ATCC BAA-1331).